We begin with the raw amino-acid sequence, 515 residues long: Microtubule-associated protein 70-4 (515 aa).

Coiled coils occupy residues 26–106 (VVDE…ALSA) and 136–351 (LESD…NTSA). The interval 208–410 (LLEKSNRQQV…KQPGSETEAA (203 aa)) is required for targeting to microtubules. The interval 340–515 (DDMRNESSNT…VKSTKDSCEI (176 aa)) is disordered. Polar residues predominate over residues 345-362 (ESSNTSASNKDNATSKQA). Over residues 364 to 374 (PKRSSSQPRRP) the composition is skewed to low complexity. Composition is skewed to basic and acidic residues over residues 409-425 (AAEK…DSPR), 450-461 (KVADDAGKENKE), and 484-515 (SEHE…SCEI).

The protein belongs to the MAP70 family.

It localises to the cytoplasm. The protein localises to the cytoskeleton. Plant-specific protein that interact with microtubules. The chain is Microtubule-associated protein 70-4 (MAP70.4) from Oryza sativa subsp. japonica (Rice).